Reading from the N-terminus, the 288-residue chain is ATP synthase gamma chain (288 aa).

It belongs to the ATPase gamma chain family. As to quaternary structure, F-type ATPases have 2 components, CF(1) - the catalytic core - and CF(0) - the membrane proton channel. CF(1) has five subunits: alpha(3), beta(3), gamma(1), delta(1), epsilon(1). CF(0) has three main subunits: a, b and c.

It localises to the cell membrane. Its function is as follows. Produces ATP from ADP in the presence of a proton gradient across the membrane. The gamma chain is believed to be important in regulating ATPase activity and the flow of protons through the CF(0) complex. This chain is ATP synthase gamma chain, found in Macrococcus caseolyticus (strain JCSC5402) (Macrococcoides caseolyticum).